Reading from the N-terminus, the 571-residue chain is Potassium-transporting ATPase potassium-binding subunit (571 aa).

12 helical membrane passes run 5–25 (GWMQIALYGAVVLALVRPLGG), 64–84 (LAYAGAMVLFNVAGFVLLYAL), 136–156 (GLTHQNFVSAASGMAVAVALI), 179–199 (LYVLLPLCTVLALFYVSQGMP), 220–240 (VGPVASQVAIKMLGTNGGGFF), 254–274 (LSNFLQMLSIFVIGAALTNVF), 285–305 (WAILTAMGLLFLAGVTVTYWA), 330–350 (FGIAASALFAVITTAASCGAV), 375–395 (IIGGVGAGLYGMLVFVVVAIF), 421–441 (MLGILCLPLMMLGFTAFATVV), 488–508 (LAIGMLVGRFFVKIPVLAIAG), and 527–547 (GGLFVGLLVGVVLIIGGLTFF).

The protein belongs to the KdpA family. As to quaternary structure, the system is composed of three essential subunits: KdpA, KdpB and KdpC.

The protein resides in the cell inner membrane. In terms of biological role, part of the high-affinity ATP-driven potassium transport (or Kdp) system, which catalyzes the hydrolysis of ATP coupled with the electrogenic transport of potassium into the cytoplasm. This subunit binds the periplasmic potassium ions and delivers the ions to the membrane domain of KdpB through an intramembrane tunnel. In Methylorubrum extorquens (strain PA1) (Methylobacterium extorquens), this protein is Potassium-transporting ATPase potassium-binding subunit.